Reading from the N-terminus, the 798-residue chain is Shutoff protein (798 aa).

The segment covering 1-14 (MESTADGDKARGEE) has biased composition (basic and acidic residues). A disordered region spans residues 1-123 (MESTADGDKA…SHSSDSELGC (123 aa)). A compositionally biased stretch (acidic residues) spans 33 to 49 (APEDEHPDDGEPDEPAD). Basic and acidic residues predominate over residues 68 to 80 (GGRDAECDGEAAR). A compositionally biased stretch (polar residues) spans 86 to 105 (DESSAPTTPSTAVRRSSGES). A binding to host EIF4G region spans residues 309-376 (LMEVLLQPFA…GRPLYRSARA (68 aa)). The RRM domain maps to 379 to 497 (SVFREPSSIK…AIYALETPTE (119 aa)). Tyr-711 is modified (phosphotyrosine; by host). The interval 740 to 798 (YADHARGAATSAEPSRALRPTSVATAAGNRTRGCSSARYRLGPTLRRRSNSSWPREWST) is disordered. Over residues 789–798 (NSSWPREWST) the composition is skewed to polar residues.

Belongs to the adenoviridae shutoff protein family. Monomer. Interacts with hexon protein; this interaction allows chaperoning and trimerization of hexon proteins. Interacts (via N-terminus) with host initiation factor EIF4G (via C-terminus). Interacts (via RRM domain) with viral mRNAs that contain the tripartite leader; this interaction allows ribosome shunting and expression of viral late mRNAs. Post-translationally, might be cleaved by the viral protease. Phosphorylated. Tyrosine phosphorylation enhances preferential binding to tripartite leader mRNAs and allows ribosome shunting. In terms of processing, methylated. Asymmetric dimethylation by host PRMT1 of the Arg/Gly-rich region may regulate shutoff protein binding to hexon and promote the capsid assembly in the nucleus.

The protein localises to the host cytoplasm. Protein that inhibits host translation while promoting late viral translation by ribosome shunting. Blocks host cap-dependent translation by binding to eIF4G, displacing MKNK1 from cap initiation complexes and preventing EIF4E phosphorylation. Binds to the tripartite leader sequence of viral late mRNAs and recruits host eIF4G, PABPC1/poly-A binding protein and 40S ribosomes subunits on viral mRNAs, allowing ribosome shunting and efficient translation of late viral mRNAs even though conventional translation via ribosome scanning from the cap has been shut off in the host cell. During assembly, acts as a chaperone protein that helps hexon proteins assembly into trimers. The chain is Shutoff protein from Galliformes (FAdV-10).